The sequence spans 1378 residues: Hybrid signal transduction histidine kinase H (1378 aa).

Residues 212-242 are a coiled coil; that stretch reads KEKFKKEELINDFKSRLETLENKIDQRVDER. Positions 243–314 constitute a PAS domain; that stretch reads IETRFKYVLE…NNNNNNNNNN (72 aa). A disordered region spans residues 294-337; that stretch reads YQQHNNNNNNNNNNNNNNNNNNNNNSNNKSPIINSPNTTSPTNT. A compositionally biased stretch (low complexity) spans 298-337; that stretch reads NNNNNNNNNNNNNNNNNNNNNSNNKSPIINSPNTTSPTNT. Residues 498–805 form the Histidine kinase domain; sequence TMSHEMRTPL…SFHFLVEVFF (308 aa). His501 is subject to Phosphohistidine; by autocatalysis. Positions 663–696 are enriched in low complexity; the sequence is NNSNNSNNNHNHNNNNNNNNHLNCSGSFNNNGFN. Disordered stretches follow at residues 663–717, 905–924, and 1103–1213; these read NNSN…DKHC, TNNN…STTT, and NNSN…HPNP. Over residues 697–714 the composition is skewed to basic residues; the sequence is HGHHHHHHHHHHHHHHHD. Composition is skewed to low complexity over residues 1103 to 1119 and 1136 to 1187; these read NNSN…SGSS and SPSL…NNNN. Over residues 1188–1206 the composition is skewed to polar residues; sequence LNHYNSDSILSSDLSPQQH. Residues 1244 to 1364 enclose the Response regulatory domain; sequence KIMVAEDSLV…ILAVELKRAW (121 aa). Asp1297 bears the 4-aspartylphosphate mark.

Activation probably requires transfer of a phosphate group between a histidine in the kinase core (transmitter) domain and an aspartate of the receiver domain.

It carries out the reaction ATP + protein L-histidine = ADP + protein N-phospho-L-histidine.. In terms of biological role, acts as a receptor histidine kinase for a signal transduction pathway. This protein undergoes an ATP-dependent autophosphorylation at a conserved histidine residue in the kinase core, and a phosphoryl group is then transferred to a conserved aspartate residue in the receiver domain. In Dictyostelium discoideum (Social amoeba), this protein is Hybrid signal transduction histidine kinase H (dhkH).